Here is a 172-residue protein sequence, read N- to C-terminus: Large ribosomal subunit protein uL10 (172 aa).

This sequence belongs to the universal ribosomal protein uL10 family. In terms of assembly, part of the ribosomal stalk of the 50S ribosomal subunit. The N-terminus interacts with L11 and the large rRNA to form the base of the stalk. The C-terminus forms an elongated spine to which L12 dimers bind in a sequential fashion forming a multimeric L10(L12)X complex.

In terms of biological role, forms part of the ribosomal stalk, playing a central role in the interaction of the ribosome with GTP-bound translation factors. The polypeptide is Large ribosomal subunit protein uL10 (Idiomarina loihiensis (strain ATCC BAA-735 / DSM 15497 / L2-TR)).